A 141-amino-acid chain; its full sequence is uncharacterized protein (141 aa).

The protein belongs to the PhzA/PhzB family.

This is an uncharacterized protein from Pseudomonas aeruginosa (strain ATCC 15692 / DSM 22644 / CIP 104116 / JCM 14847 / LMG 12228 / 1C / PRS 101 / PAO1).